Consider the following 217-residue polypeptide: Cytidylate kinase (217 aa).

ATP is bound at residue 11-19 (GPAGAGKST).

This sequence belongs to the cytidylate kinase family. Type 1 subfamily.

It is found in the cytoplasm. It catalyses the reaction CMP + ATP = CDP + ADP. The catalysed reaction is dCMP + ATP = dCDP + ADP. The sequence is that of Cytidylate kinase from Clostridium perfringens (strain ATCC 13124 / DSM 756 / JCM 1290 / NCIMB 6125 / NCTC 8237 / Type A).